A 481-amino-acid chain; its full sequence is Protein DETOXIFICATION 12 (481 aa).

12 helical membrane-spanning segments follow: residues 38–58 (LIFFAAPMAAVVIAQFMLQIV), 76–96 (LASSFCNVTGFSFIIGLSCAL), 117–137 (YTAMFCLALVCLPLSLIWFNM), 154–174 (AGKYATWLIPGLFAYAVLQPL), 187–207 (LLITSYVVFCIHVPLCWFLVY), 214–234 (LGGALAISLSNWLYAIFLGSF), 267–287 (AAMICLEWWSYELIILLSGLL), 296–316 (VLSVCLQTISTMYSIPLAIAA), 336–356 (IVVYAAMSLAVIDALIVSMSL), 380–400 (MAPLVSISLMLDALQGVLSGI), 415–435 (LGAFYLWGIPIAASLAFWIHL), and 438–458 (VGLWIGIQAGAVLQTLLLALV).

This sequence belongs to the multi antimicrobial extrusion (MATE) (TC 2.A.66.1) family.

It is found in the membrane. The polypeptide is Protein DETOXIFICATION 12 (Arabidopsis thaliana (Mouse-ear cress)).